The chain runs to 198 residues: V-type proton ATPase subunit E (198 aa).

This sequence belongs to the V-ATPase E subunit family.

Produces ATP from ADP in the presence of a proton gradient across the membrane. This chain is V-type proton ATPase subunit E, found in Borrelia recurrentis (strain A1).